We begin with the raw amino-acid sequence, 258 residues long: Mitochondrial distribution and morphology protein 12 (258 aa).

The region spanning 1–233 (MSFDIHWSNL…WPSWIELDFN (233 aa)) is the SMP-LTD domain. The segment at 238-258 (EDLQQSKDTPTTANTGTTTTN) is disordered. Residues 246-258 (TPTTANTGTTTTN) show a composition bias toward low complexity.

Belongs to the MDM12 family. Component of the ER-mitochondria encounter structure (ERMES) or MDM complex, composed of MMM1, MDM10, MDM12 and MDM34. An MMM1 homodimer associates with one molecule of MDM12 on each side in a pairwise head-to-tail manner, and the SMP-LTD domains of MMM1 and MDM12 generate a continuous hydrophobic tunnel for phospholipid trafficking.

The protein resides in the mitochondrion outer membrane. It localises to the endoplasmic reticulum membrane. Component of the ERMES/MDM complex, which serves as a molecular tether to connect the endoplasmic reticulum (ER) and mitochondria. Components of this complex are involved in the control of mitochondrial shape and protein biogenesis, and function in nonvesicular lipid trafficking between the ER and mitochondria. MDM12 is required for the interaction of the ER-resident membrane protein MMM1 and the outer mitochondrial membrane-resident beta-barrel protein MDM10. The MDM12-MMM1 subcomplex functions in the major beta-barrel assembly pathway that is responsible for biogenesis of all mitochondrial outer membrane beta-barrel proteins, and acts in a late step after the SAM complex. The MDM10-MDM12-MMM1 subcomplex further acts in the TOM40-specific pathway after the action of the MDM12-MMM1 complex. Essential for establishing and maintaining the structure of mitochondria and maintenance of mtDNA nucleoids. This is Mitochondrial distribution and morphology protein 12 from Zygosaccharomyces rouxii (strain ATCC 2623 / CBS 732 / NBRC 1130 / NCYC 568 / NRRL Y-229).